A 286-amino-acid chain; its full sequence is Citrullinase (286 aa).

Positions 4-258 constitute a CN hydrolase domain; the sequence is IKVAVVQLSF…DDILYATFDF (255 aa). Catalysis depends on Glu-43, which acts as the Proton acceptor. Residue Lys-116 is part of the active site. Residue Cys-153 is the Nucleophile of the active site.

This sequence belongs to the carbon-nitrogen hydrolase superfamily.

It carries out the reaction L-citrulline + H2O + 2 H(+) = L-ornithine + NH4(+) + CO2. Functionally, catalyzes the degradation of citrulline into ornithine, carbon dioxide and ammonia. Contributes to intramacrophage survival, in vivo growth and pathogenesis. This chain is Citrullinase, found in Francisella tularensis subsp. tularensis (strain SCHU S4 / Schu 4).